An 893-amino-acid polypeptide reads, in one-letter code: UPF0182 protein CLI_0022 (893 aa).

The next 7 membrane-spanning stretches (helical) occupy residues 9 to 29 (IPLF…NFII), 49 to 69 (AIII…WMYY), 94 to 114 (LFFI…SSSY), 154 to 174 (VIIS…FILE), 202 to 222 (LAIV…IKIW), 246 to 266 (FYKI…LSIV), and 273 to 293 (VSIC…ASFL).

The protein belongs to the UPF0182 family.

It localises to the cell membrane. In Clostridium botulinum (strain Langeland / NCTC 10281 / Type F), this protein is UPF0182 protein CLI_0022.